The primary structure comprises 575 residues: Protein AUXIN SIGNALING F-BOX 2 (575 aa).

An F-box domain is found at 1 to 47 (MNYFPDEVIEHVFDFVTSHKDRNAISLVCKSWYKIERYSRQKVFIGN). A 1D-myo-inositol hexakisphosphate-binding site is contributed by Lys-69. Positions 76–77 (DF) are interaction with auxin-responsive proteins. 1D-myo-inositol hexakisphosphate-binding positions include 108–109 (KR) and Arg-340. The interaction with auxin-responsive proteins stretch occupies residues 343 to 348 (PSDLLG). 396–398 (RFR) lines the 1D-myo-inositol hexakisphosphate pocket. The interval 400–404 (CILEP) is interaction with auxin-responsive proteins. Arg-431 contributes to the 1D-myo-inositol hexakisphosphate binding site. The interval 459–460 (AF) is interaction with auxin-responsive proteins. 1D-myo-inositol hexakisphosphate-binding positions include 479–480 (KK) and Arg-504.

Part of a SCF (SKP1-cullin-F-box) protein ligase complex. Interacts with Aux/IAA proteins (IAA7) in an auxin-dependent manner. As to expression, ubiquitous, with higher levels in seedlings.

Its subcellular location is the nucleus. It participates in protein modification; protein ubiquitination. In terms of biological role, component of SCF(ASK-cullin-F-box) E3 ubiquitin ligase complexes, which may mediate the ubiquitination and subsequent proteasomal degradation of target proteins. Confers sensitivity to the virulent bacterial pathogen P.syringae. Auxin receptor that mediates Aux/IAA proteins proteasomal degradation and auxin-regulated transcription. Involved in embryogenesis regulation by auxin. This is Protein AUXIN SIGNALING F-BOX 2 (AFB2) from Arabidopsis thaliana (Mouse-ear cress).